Here is a 108-residue protein sequence, read N- to C-terminus: Dormancy-associated protein homolog 1 (108 aa).

The interval 28–59 is disordered; the sequence is DIKGVGEGSSSKTVAAVAGSPGTPTTPGSARK. Serine 47 bears the Phosphoserine mark. At threonine 50 the chain carries Phosphothreonine.

The protein belongs to the DRM1/ARP family. As to expression, expressed mainly in the low bolt.

In Arabidopsis thaliana (Mouse-ear cress), this protein is Dormancy-associated protein homolog 1.